The primary structure comprises 604 residues: MEGHVIVPLEKLSLELNNGGIMLNHDKDISALQEEISALRSRQRHLDHRRQEALDKLIDLKGSIRVFCRVRPSISANNFMTKSPVTVENEKIVVRAVGIKKEFSVDRVFDQESTQEDVFQEVKPILRSALDGHNVCILAYGQTGTGKTYTMEGNNGKLGIVPRAIQELFSHASQDSSSTYSFSISMLEVYMGTVRDLLTPRQPLFRSTECNTSSIISILATKSGAVEVEGLTDVAIQDLKKANQWYCRGRRARSTSWTNVNDVSSRSHCLTRITIKRSSGGTTEECSKLWLVDLGGSERLLKTGASGLTMDEGKAINLSLSALGDVIAALRRKRSHVPYRNSKLTQILSDSLGDGSKVLMVVHISPSDDDIGETVCSLSFAKRARSIESSKELSEDIKKLKQKRIAELDKEICDAEQELKDLNEQIKRAETSLEERKKLSSSACQALSDEKGSPRSTLVVVGHIDSAESPQATEKTKSRASHGSVPHFMSPTVCSRQRHSSASHSATKTRLTKSVNRYPAAELSGSHSFSYSSCKNAAKARSVAFSSSMPKMKCLPLKSDQINMSNNSIDSTAASAPRRRESFISRPAQRAPLHQHRRRMSSLT.

Residues 22–61 adopt a coiled-coil conformation; it reads MLNHDKDISALQEEISALRSRQRHLDHRRQEALDKLIDLK. The region spanning 63 to 387 is the Kinesin motor domain; sequence SIRVFCRVRP…LSFAKRARSI (325 aa). 141 to 148 serves as a coordination point for ATP; the sequence is GQTGTGKT. Residues 383–443 are a coiled coil; that stretch reads RARSIESSKE…EERKKLSSSA (61 aa). Disordered stretches follow at residues 465–511 and 565–604; these read DSAE…KTRL and SNNS…SSLT. Residues 565–574 show a composition bias toward polar residues; that stretch reads SNNSIDSTAA. Positions 593–604 are enriched in basic residues; the sequence is LHQHRRRMSSLT.

This sequence belongs to the TRAFAC class myosin-kinesin ATPase superfamily. Kinesin family. KIN-14 subfamily.

The protein is Kinesin-like protein KIN-14O of Oryza sativa subsp. japonica (Rice).